The sequence spans 609 residues: Wee1-like protein kinase (609 aa).

The span at 1–10 (MAFRQSEHEM) shows a compositional bias: basic and acidic residues. Disordered regions lie at residues 1–88 (MAFR…SMSP) and 147–166 (PLHNRKLPTQDTANVNPFTP). Phosphoserine occurs at positions 23, 25, and 27. Residues 37 to 48 (RFADDDFDKDTP) are compositionally biased toward basic and acidic residues. Phosphothreonine is present on threonine 47. Position 52 is a phosphoserine (serine 52). Positions 153–165 (LPTQDTANVNPFT) are enriched in polar residues. Threonine 165 bears the Phosphothreonine mark. Serine 168 carries the phosphoserine modification. The region spanning 239-517 (FMQVNVIGVG…SQSIFSHPIL (279 aa)) is the Protein kinase domain. Residues 245-253 (IGVGEFGVV) and lysine 268 contribute to the ATP site. The active-site Proton acceptor is aspartate 361. Residues asparagine 366 and aspartate 412 each coordinate Mg(2+).

The protein belongs to the protein kinase superfamily. Ser/Thr protein kinase family. WEE1 subfamily. The cofactor is Mg(2+). In terms of processing, phosphorylated during M and G1 phases. Expressed in embryos; expression remains high in the proliferating cells of the central nervous system well after cells in the rest of the embryo have ceased dividing.

Its subcellular location is the nucleus. The catalysed reaction is L-tyrosyl-[protein] + ATP = O-phospho-L-tyrosyl-[protein] + ADP + H(+). Negatively regulated by phosphorylation in the M-phase. In terms of biological role, acts as a negative regulator of entry into mitosis (G2 to M transition). This kinase specifically phosphorylates and inactivates cyclin B1-complexed CDC2. In Drosophila melanogaster (Fruit fly), this protein is Wee1-like protein kinase.